Consider the following 771-residue polypeptide: MIKMWRLQIVLVPPSAQDIITFLEARLNTPQSVSPMVQYNEDIITHNNSINNCSDPSPTSPSSQNSIQSNRSSDFINYLPNCKKFLHFTDGDNTLLQLSNEILTKFDRLYPNFKESIEIVSLQDRHGCDLDSEFIIKDVFENDGVVLVILKDELDWSRNQHISLLQLARQRRRQDNKPSTKSIVTEKRKKISKEDLSSISNKDTMHLIAKSSLKNNFINKSRVSTPLMNEILPLASKYDALNKEKCPMPLTSTVVASNVHKDVKDHARAKEGVVTQGSDNNKENIPSSTQQQKNDGAKRAESKDLDLLRNSSEDADYEPADENSPQISFDSIDTDFQLSTTSHTNSDMHIQYSNPSSGAHSPRKSSLEIKVQNKKGDDLPLNDKDIGENCRRIEAFSDEEDFNETDNDRADSFINNSKKASMGFRDINSDLDSVSFNSDIENAVQSTQSTKNVVSPPFFPEKELNNRLHQSQGKEALFRLVEKEFPDKSLGAASSTSHAKDVKIQETIRKLNRFKPTGETKVQKRNSITEPYYGKFGIMKKDKPKSITSKGVSLETKHFDDPNTIISGEKFAKFGKIKVKRKTDDVGSKVIEFKRKRNMGNRSLKDIFANAGKPPNAASTIKVVKLMRDPVDNSKDKVEATSNSTAQEQEQVSPKLPVMNSTPGKRKNGQAIPSSLERTPQLKKVKVTRSHSSPSSSSSMSLESSLDSSSSDDSDDDSDSRNVQVKKINFKTSHGPAGNSNGKPMLDVDDNEINTKKYQTPKYVESDEDDQ.

Disordered regions lie at residues 48 to 69 (NSIN…SIQS), 271 to 330 (EGVV…ISFD), and 346 to 367 (SDMH…KSSL). Over residues 51 to 69 (NNCSDPSPTSPSSQNSIQS) the composition is skewed to low complexity. Positions 275–294 (TQGSDNNKENIPSSTQQQKN) are enriched in polar residues. A compositionally biased stretch (basic and acidic residues) spans 295–307 (DGAKRAESKDLDL). Residues 346–359 (SDMHIQYSNPSSGA) are compositionally biased toward polar residues. S397 is subject to Phosphoserine. A Phosphothreonine modification is found at T405. Positions 633–771 (NSKDKVEATS…KYVESDEDDQ (139 aa)) are disordered. The span at 640-652 (ATSNSTAQEQEQV) shows a compositional bias: polar residues. Over residues 690 to 709 (SHSSPSSSSSMSLESSLDSS) the composition is skewed to low complexity.

The protein to yeast YJL076w. In terms of assembly, interacts with HPR1.

It localises to the nucleus. This Saccharomyces cerevisiae (strain ATCC 204508 / S288c) (Baker's yeast) protein is Topoisomerase 1-associated factor 2 (TOF2).